A 298-amino-acid polypeptide reads, in one-letter code: GTP cyclohydrolase FolE2 (298 aa).

It belongs to the GTP cyclohydrolase IV family.

The catalysed reaction is GTP + H2O = 7,8-dihydroneopterin 3'-triphosphate + formate + H(+). The protein operates within cofactor biosynthesis; 7,8-dihydroneopterin triphosphate biosynthesis; 7,8-dihydroneopterin triphosphate from GTP: step 1/1. In terms of biological role, converts GTP to 7,8-dihydroneopterin triphosphate. This chain is GTP cyclohydrolase FolE2, found in Xylella fastidiosa (strain 9a5c).